Consider the following 1067-residue polypeptide: Myocardin-related transcription factor B (1067 aa).

RPEL repeat units follow at residues 46 to 71, 90 to 115, and 134 to 159; these read EVLQ…PPLK, NFLK…EETL, and DDLN…PVDL. Disordered stretches follow at residues 175–223 and 249–286; these read NLDT…NTTI and PLSC…PRVK. Composition is skewed to polar residues over residues 193 to 203 and 212 to 223; these read QPASQESQGSA and SDSSSPVSNTTI. Basic and acidic residues predominate over residues 268 to 283; the sequence is KHTEKPRSKKSKDPKP. One can recognise an SAP domain in the interval 390–424; sequence LDDMKVAELKMELKLRGLPVSGTKMDLIERLKPFQ. A coiled-coil region spans residues 540–594; the sequence is GNTPNVELDAVEKDRKLQEKEKQIEELKRKLEQEQKLVEVLKKQLELEKRGQQQQ. The span at 799 to 819 shows a compositional bias: polar residues; that stretch reads ISTSAQPQRSTQLTAVQNGPT. A disordered region spans residues 799–829; it reads ISTSAQPQRSTQLTAVQNGPTSLHEKSSTPP.

As to quaternary structure, interacts with SRF.

The protein localises to the nucleus. Its function is as follows. Poor transcriptional factor which uses the canonical single or multiple CArG boxes DNA sequence. Acts as a cofactor of serum response factor (SRF) with the potential to modulate SRF target genes. This Xenopus laevis (African clawed frog) protein is Myocardin-related transcription factor B (mrtfb).